We begin with the raw amino-acid sequence, 146 residues long: Hemoglobin subunit beta (146 aa).

Residue V1 is modified to N-acetylvaline. The Globin domain occupies 2 to 146; sequence HLTDAEKALV…VATALAHKYH (145 aa). T12 carries the post-translational modification Phosphothreonine. At S44 the chain carries Phosphoserine. An N6-acetyllysine modification is found at K59. Heme b is bound at residue H63. An N6-acetyllysine modification is found at K82. H92 contacts heme b. C93 is subject to S-nitrosocysteine. K144 is modified (N6-acetyllysine).

It belongs to the globin family. Heterotetramer of two alpha chains and two beta chains. In terms of tissue distribution, red blood cells.

In terms of biological role, involved in oxygen transport from the lung to the various peripheral tissues. In Peromyscus californicus (California mouse), this protein is Hemoglobin subunit beta.